Reading from the N-terminus, the 189-residue chain is dCTP deaminase, dUMP-forming (189 aa).

DCTP contacts are provided by residues 101–106, Asp-119, 127–129, Gln-148, Tyr-162, Lys-170, and Gln-174; these read KSSLGR and TLE. Glu-129 serves as the catalytic Proton donor/acceptor. Residues 163-189 are disordered; sequence GSGKLGSKYQGQRGPTPSKAYLNFPNK.

It belongs to the dCTP deaminase family. Homotrimer.

It carries out the reaction dCTP + 2 H2O = dUMP + NH4(+) + diphosphate. The protein operates within pyrimidine metabolism; dUMP biosynthesis; dUMP from dCTP: step 1/1. Functionally, bifunctional enzyme that catalyzes both the deamination of dCTP to dUTP and the hydrolysis of dUTP to dUMP without releasing the toxic dUTP intermediate. The chain is dCTP deaminase, dUMP-forming from Corynebacterium glutamicum (strain R).